A 160-amino-acid polypeptide reads, in one-letter code: Ureidoglycolate lyase (160 aa).

It belongs to the ureidoglycolate lyase family. Homodimer. Requires Ni(2+) as cofactor.

It carries out the reaction (S)-ureidoglycolate = urea + glyoxylate. Its pathway is nitrogen metabolism; (S)-allantoin degradation. Catalyzes the catabolism of the allantoin degradation intermediate (S)-ureidoglycolate, generating urea and glyoxylate. Involved in the anaerobic utilization of allantoin as sole nitrogen source. Reinforces the induction of genes involved in the degradation of allantoin and glyoxylate by producing glyoxylate. The chain is Ureidoglycolate lyase from Escherichia coli O127:H6 (strain E2348/69 / EPEC).